The following is an 81-amino-acid chain: MLRHILGLAKKHPSLIPLFVFLGTGATGATLYLLRLALFSPDVCWDRNNPEPWNKLGPNDQYKFYSVNVDYDKLKKERPDF.

The Mitochondrial matrix segment spans residues methionine 1–serine 14. Lysine 10 is modified (N6-acetyllysine). The chain crosses the membrane as a helical span at residues leucine 15–alanine 37. The Mitochondrial intermembrane portion of the chain corresponds to leucine 38–phenylalanine 81. Serine 66 is modified (phosphoserine).

It belongs to the complex IV NDUFA4 subunit family. Component of the cytochrome c oxidase (complex IV, CIV), a multisubunit enzyme composed of 14 subunits. The complex is composed of a catalytic core of 3 subunits MT-CO1, MT-CO2 and MT-CO3, encoded in the mitochondrial DNA, and 11 supernumerary subunits COX4I, COX5A, COX5B, COX6A, COX6B, COX6C, COX7A, COX7B, COX7C, COX8 and NDUFA4, which are encoded in the nuclear genome. The complex exists as a monomer or a dimer and forms supercomplexes (SCs) in the inner mitochondrial membrane with NADH-ubiquinone oxidoreductase (complex I, CI) and ubiquinol-cytochrome c oxidoreductase (cytochrome b-c1 complex, complex III, CIII), resulting in different assemblies (supercomplex SCI(1)III(2)IV(1) and megacomplex MCI(2)III(2)IV(2)). Interacts with RAB5IF. Interacts with FLVCR2; this interaction occurs in the absence of heme and is disrupted upon heme binding.

The protein resides in the mitochondrion inner membrane. In terms of biological role, component of the cytochrome c oxidase, the last enzyme in the mitochondrial electron transport chain which drives oxidative phosphorylation. The respiratory chain contains 3 multisubunit complexes succinate dehydrogenase (complex II, CII), ubiquinol-cytochrome c oxidoreductase (cytochrome b-c1 complex, complex III, CIII) and cytochrome c oxidase (complex IV, CIV), that cooperate to transfer electrons derived from NADH and succinate to molecular oxygen, creating an electrochemical gradient over the inner membrane that drives transmembrane transport and the ATP synthase. Cytochrome c oxidase is the component of the respiratory chain that catalyzes the reduction of oxygen to water. Electrons originating from reduced cytochrome c in the intermembrane space (IMS) are transferred via the dinuclear copper A center (CU(A)) of subunit 2 and heme A of subunit 1 to the active site in subunit 1, a binuclear center (BNC) formed by heme A3 and copper B (CU(B)). The BNC reduces molecular oxygen to 2 water molecules unsing 4 electrons from cytochrome c in the IMS and 4 protons from the mitochondrial matrix. NDUFA4 is required for complex IV maintenance. The chain is Cytochrome c oxidase subunit NDUFA4 (NDUFA4) from Macaca fascicularis (Crab-eating macaque).